The sequence spans 428 residues: Spermidine/putrescine import ATP-binding protein PotA (428 aa).

Residues 6–238 (IEFKNVSKTY…PINHFVADFI (233 aa)) form the ABC transporter domain. 40–47 (GASGSGKS) contacts ATP.

Belongs to the ABC transporter superfamily. Spermidine/putrescine importer (TC 3.A.1.11.1) family. The complex is composed of two ATP-binding proteins (PotA), two transmembrane proteins (PotB and PotC) and a solute-binding protein (PotD).

Its subcellular location is the cell membrane. It carries out the reaction ATP + H2O + polyamine-[polyamine-binding protein]Side 1 = ADP + phosphate + polyamineSide 2 + [polyamine-binding protein]Side 1.. Part of the ABC transporter complex PotABCD involved in spermidine/putrescine import. Responsible for energy coupling to the transport system. In Lactococcus lactis subsp. lactis (strain IL1403) (Streptococcus lactis), this protein is Spermidine/putrescine import ATP-binding protein PotA.